Reading from the N-terminus, the 530-residue chain is Probable NADH-specific resorcinol 4-hydroxylase (530 aa).

It carries out the reaction resorcinol + NADH + O2 + H(+) = benzene-1,2,4-triol + NAD(+) + H2O. In terms of biological role, single-component hydroxylase that is part of the gamma-resorcylate (GRA) degradation pathway. GRA is initially converted by GRA decarboxylase to resorcinol, which is hydroxylated by resorcinol 4-hydroxylase. The chain is Probable NADH-specific resorcinol 4-hydroxylase (tsdB) from Rhodococcus jostii (strain RHA1).